Here is a 1361-residue protein sequence, read N- to C-terminus: DNA-directed RNA polymerase subunit beta' (1361 aa).

Zn(2+) contacts are provided by cysteine 69, cysteine 71, cysteine 84, and cysteine 87. Mg(2+) is bound by residues aspartate 460, aspartate 462, and aspartate 464. Zn(2+)-binding residues include cysteine 808, cysteine 882, cysteine 889, and cysteine 892.

The protein belongs to the RNA polymerase beta' chain family. The RNAP catalytic core consists of 2 alpha, 1 beta, 1 beta' and 1 omega subunit. When a sigma factor is associated with the core the holoenzyme is formed, which can initiate transcription. It depends on Mg(2+) as a cofactor. Zn(2+) serves as cofactor.

It carries out the reaction RNA(n) + a ribonucleoside 5'-triphosphate = RNA(n+1) + diphosphate. In terms of biological role, DNA-dependent RNA polymerase catalyzes the transcription of DNA into RNA using the four ribonucleoside triphosphates as substrates. In Rickettsia bellii (strain RML369-C), this protein is DNA-directed RNA polymerase subunit beta'.